The primary structure comprises 300 residues: Probable ABC transporter permease protein YurM (300 aa).

The next 6 membrane-spanning stretches (helical) occupy residues 37 to 57 (VWVF…WMVM), 98 to 118 (VIVT…AAYG), 129 to 149 (FFLV…LVPL), 161 to 181 (TYWA…IILI), 204 to 224 (FGVF…TSGI), and 264 to 284 (WGVL…LFLL). Residues 94–285 (FMNSVIVTAL…APIIILFLLM (192 aa)) enclose the ABC transmembrane type-1 domain.

Belongs to the binding-protein-dependent transport system permease family. MalFG subfamily.

It localises to the cell membrane. Probably part of the binding-protein-dependent transport system YurMNO. Probably responsible for the translocation of the substrate across the membrane. The protein is Probable ABC transporter permease protein YurM (yurM) of Bacillus subtilis (strain 168).